The following is a 328-amino-acid chain: Tryptophan--tRNA ligase (328 aa).

Residues 8–10 and 16–17 each bind ATP; these read RPT and GH. The 'HIGH' region signature appears at 9 to 17; that stretch reads PTGKLHIGH. Asp136 is an L-tryptophan binding site. Residues 148-150, Leu186, and 193-197 contribute to the ATP site; these read GED and KMSKS. Residues 193–197 carry the 'KMSKS' region motif; it reads KMSKS.

It belongs to the class-I aminoacyl-tRNA synthetase family. Homodimer.

It is found in the cytoplasm. The enzyme catalyses tRNA(Trp) + L-tryptophan + ATP = L-tryptophyl-tRNA(Trp) + AMP + diphosphate + H(+). In terms of biological role, catalyzes the attachment of tryptophan to tRNA(Trp). The polypeptide is Tryptophan--tRNA ligase (Thermotoga maritima (strain ATCC 43589 / DSM 3109 / JCM 10099 / NBRC 100826 / MSB8)).